The sequence spans 466 residues: Soluble pyridine nucleotide transhydrogenase (466 aa).

36 to 45 (ERYQNVGGGC) lines the FAD pocket.

It belongs to the class-I pyridine nucleotide-disulfide oxidoreductase family. Homooligomer; probable homooctamer. It depends on FAD as a cofactor.

The protein resides in the cytoplasm. The enzyme catalyses NAD(+) + NADPH = NADH + NADP(+). Conversion of NADPH, generated by peripheral catabolic pathways, to NADH, which can enter the respiratory chain for energy generation. The sequence is that of Soluble pyridine nucleotide transhydrogenase from Escherichia coli O157:H7.